A 153-amino-acid polypeptide reads, in one-letter code: Peptide deformylase (153 aa).

Positions 87 and 129 each coordinate Fe cation. Residue Glu130 is part of the active site. His133 provides a ligand contact to Fe cation.

The protein belongs to the polypeptide deformylase family. The cofactor is Fe(2+).

It carries out the reaction N-terminal N-formyl-L-methionyl-[peptide] + H2O = N-terminal L-methionyl-[peptide] + formate. Removes the formyl group from the N-terminal Met of newly synthesized proteins. Requires at least a dipeptide for an efficient rate of reaction. N-terminal L-methionine is a prerequisite for activity but the enzyme has broad specificity at other positions. This Dictyoglomus turgidum (strain DSM 6724 / Z-1310) protein is Peptide deformylase.